Here is a 505-residue protein sequence, read N- to C-terminus: Lysine--tRNA ligase (505 aa).

Residues glutamate 415 and glutamate 422 each contribute to the Mg(2+) site.

The protein belongs to the class-II aminoacyl-tRNA synthetase family. Homodimer. Mg(2+) serves as cofactor.

The protein resides in the cytoplasm. It catalyses the reaction tRNA(Lys) + L-lysine + ATP = L-lysyl-tRNA(Lys) + AMP + diphosphate. This Yersinia enterocolitica serotype O:8 / biotype 1B (strain NCTC 13174 / 8081) protein is Lysine--tRNA ligase.